Consider the following 161-residue polypeptide: 6,7-dimethyl-8-ribityllumazine synthase (161 aa).

5-amino-6-(D-ribitylamino)uracil-binding positions include W26, 58-60 (SFE), and 81-83 (VVI). (2S)-2-hydroxy-3-oxobutyl phosphate is bound at residue 86-87 (GT). H89 (proton donor) is an active-site residue. F114 serves as a coordination point for 5-amino-6-(D-ribitylamino)uracil. R128 is a (2S)-2-hydroxy-3-oxobutyl phosphate binding site.

The protein belongs to the DMRL synthase family.

It carries out the reaction (2S)-2-hydroxy-3-oxobutyl phosphate + 5-amino-6-(D-ribitylamino)uracil = 6,7-dimethyl-8-(1-D-ribityl)lumazine + phosphate + 2 H2O + H(+). It participates in cofactor biosynthesis; riboflavin biosynthesis; riboflavin from 2-hydroxy-3-oxobutyl phosphate and 5-amino-6-(D-ribitylamino)uracil: step 1/2. In terms of biological role, catalyzes the formation of 6,7-dimethyl-8-ribityllumazine by condensation of 5-amino-6-(D-ribitylamino)uracil with 3,4-dihydroxy-2-butanone 4-phosphate. This is the penultimate step in the biosynthesis of riboflavin. This is 6,7-dimethyl-8-ribityllumazine synthase from Streptomyces avermitilis (strain ATCC 31267 / DSM 46492 / JCM 5070 / NBRC 14893 / NCIMB 12804 / NRRL 8165 / MA-4680).